The sequence spans 70 residues: DNA gyrase inhibitor YacG (70 aa).

Cysteine 7, cysteine 10, cysteine 26, and cysteine 30 together coordinate Zn(2+).

Belongs to the DNA gyrase inhibitor YacG family. Interacts with GyrB. The cofactor is Zn(2+).

In terms of biological role, inhibits all the catalytic activities of DNA gyrase by preventing its interaction with DNA. Acts by binding directly to the C-terminal domain of GyrB, which probably disrupts DNA binding by the gyrase. In Shewanella woodyi (strain ATCC 51908 / MS32), this protein is DNA gyrase inhibitor YacG.